The chain runs to 164 residues: UPF0262 protein Nham_0287 (164 aa).

This sequence belongs to the UPF0262 family.

The chain is UPF0262 protein Nham_0287 from Nitrobacter hamburgensis (strain DSM 10229 / NCIMB 13809 / X14).